Consider the following 178-residue polypeptide: Large ribosomal subunit protein eL20 (178 aa).

Belongs to the eukaryotic ribosomal protein eL20 family.

The polypeptide is Large ribosomal subunit protein eL20 (RPL18A) (Castanea sativa (Sweet chestnut)).